A 98-amino-acid chain; its full sequence is Large ribosomal subunit protein uL23 (98 aa).

Belongs to the universal ribosomal protein uL23 family. As to quaternary structure, part of the 50S ribosomal subunit. Contacts protein L29, and trigger factor when it is bound to the ribosome.

In terms of biological role, one of the early assembly proteins it binds 23S rRNA. One of the proteins that surrounds the polypeptide exit tunnel on the outside of the ribosome. Forms the main docking site for trigger factor binding to the ribosome. The polypeptide is Large ribosomal subunit protein uL23 (Streptococcus pyogenes serotype M1).